Consider the following 290-residue polypeptide: Eukaryotic translation initiation factor 3 subunit F-2 (290 aa).

The MPN domain maps to 12–150; it reads VRLQPLVLFQ…TRLYCGVTMG (139 aa).

It belongs to the eIF-3 subunit F family. In terms of assembly, component of the eukaryotic translation initiation factor 3 (eIF-3) complex. The eIF-3 complex interacts with pix.

Its subcellular location is the cytoplasm. In terms of biological role, component of the eukaryotic translation initiation factor 3 (eIF-3) complex, which is involved in protein synthesis of a specialized repertoire of mRNAs and, together with other initiation factors, stimulates binding of mRNA and methionyl-tRNAi to the 40S ribosome. The eIF-3 complex specifically targets and initiates translation of a subset of mRNAs involved in cell proliferation. The sequence is that of Eukaryotic translation initiation factor 3 subunit F-2 from Drosophila virilis (Fruit fly).